A 342-amino-acid chain; its full sequence is MNHSLKPWNTFGIDHNAQHIVCAEDEQQLLNAWQHATAEGQPVLILGEGSNVLFLEDYRGTVIINRIKGIEIHDEPDAWYLHVGAGENWHRLVKYTLQEGMPGLENLALIPGCVGSSPIQNIGAYGVELQRVCAYVDCVELATGKQVRLTAKECRFGYRDSIFKHEYQDRFAIVAVGLRLPKEWQPVLTYGDLTRLDPTTVTPQQVFDAVCHMRTTKLPDPKVNGNAGSFFKNPVVSAETAKALLSQFPTAPNYPQADGSVKLAAGWLIDQCQLKGMQMGGVAVHRQQALVLINEDNAKSEDVVQLAHHVRQKVGEKFNVWLEPEVRFIGASGEVSAVETIS.

One can recognise an FAD-binding PCMH-type domain in the interval 13 to 183 (IDHNAQHIVC…VAVGLRLPKE (171 aa)). The active site involves R159. Y190 is a substrate binding site. The active-site Proton donor is the S229. The active site involves E325.

This sequence belongs to the MurB family. Monomer. It depends on FAD as a cofactor.

The protein localises to the cytoplasm. The enzyme catalyses UDP-N-acetyl-alpha-D-muramate + NADP(+) = UDP-N-acetyl-3-O-(1-carboxyvinyl)-alpha-D-glucosamine + NADPH + H(+). Its pathway is cell wall biogenesis; peptidoglycan biosynthesis. Functionally, cell wall formation. This Escherichia coli O157:H7 protein is UDP-N-acetylenolpyruvoylglucosamine reductase.